The following is a 444-amino-acid chain: Tol-Pal system protein TolB (444 aa).

A signal peptide spans methionine 1–alanine 19.

Belongs to the TolB family. The Tol-Pal system is composed of five core proteins: the inner membrane proteins TolA, TolQ and TolR, the periplasmic protein TolB and the outer membrane protein Pal. They form a network linking the inner and outer membranes and the peptidoglycan layer.

The protein resides in the periplasm. Functionally, part of the Tol-Pal system, which plays a role in outer membrane invagination during cell division and is important for maintaining outer membrane integrity. The sequence is that of Tol-Pal system protein TolB from Rickettsia massiliae (strain Mtu5).